The following is a 237-amino-acid chain: MPESLMDIRVEHKAFAGNTVLHGIDLSLQSGEIVSLLGPSGCGKSTLLRIVAGLEQDFRGSVQRIQGEVAFVFQEPRLMPWLTVAQNIGFSDDDRYDRRWVAQLIEEVGLSGFADALPKALSGGMAQRVAIARGLYSHPAVLLLDEPFSAVDAFTRMKLQDLLLQLAARHAITLLLVTHDVDEALYLSDRVLVMGSRPGTITHQLPVGLQTPRDRRDPLLARLKAQALTELQQAHVI.

One can recognise an ABC transporter domain in the interval 5–221 (LMDIRVEHKA…PRDRRDPLLA (217 aa)). Residue 38 to 45 (GPSGCGKS) participates in ATP binding.

This sequence belongs to the ABC transporter superfamily. Aliphatic sulfonates importer (TC 3.A.1.17.2) family. In terms of assembly, the complex is composed of two ATP-binding proteins (SsuB), two transmembrane proteins (SsuC) and a solute-binding protein (SsuA).

It is found in the cell inner membrane. It catalyses the reaction ATP + H2O + aliphatic sulfonate-[sulfonate-binding protein]Side 1 = ADP + phosphate + aliphatic sulfonateSide 2 + [sulfonate-binding protein]Side 1.. Part of the ABC transporter complex SsuABC involved in aliphatic sulfonates import. Responsible for energy coupling to the transport system. This Pseudomonas syringae pv. syringae (strain B728a) protein is Aliphatic sulfonates import ATP-binding protein SsuB 1.